Here is a 470-residue protein sequence, read N- to C-terminus: Box C/D snoRNA protein 1 (470 aa).

Residues 1–70 (MEFAAENEGK…EEGSGQRPEE (70 aa)) form a disordered region. Position 25 is a phosphoserine (serine 25). Residues 41-51 (EFGGGEEGTGL) are compositionally biased toward gly residues. Glycyl lysine isopeptide (Lys-Gly) (interchain with G-Cter in SUMO2) cross-links involve residues lysine 79, lysine 108, lysine 118, lysine 138, lysine 143, lysine 153, lysine 162, lysine 173, lysine 183, and lysine 200. Zn(2+) is bound by residues cysteine 220, cysteine 223, cysteine 232, cysteine 235, cysteine 240, cysteine 244, histidine 248, and cysteine 254. Residues 220–254 (CETCGTEEAKYRCPRCMRYSCSLPCVKKHKAELTC) form an HIT-type zinc finger. Lysine 459 is covalently cross-linked (Glycyl lysine isopeptide (Lys-Gly) (interchain with G-Cter in SUMO2)).

Belongs to the BCD1 family. Interacts with FBL, SNU13, NOP58, NUFIP1, RUVBL1, RUVBL2 and TAF9. Interacts (via HIT-type zinc finger) with the RUVBL1/RUVBL2 complex in the presence of ADP.

Its function is as follows. Required for box C/D snoRNAs accumulation involved in snoRNA processing, snoRNA transport to the nucleolus and ribosome biogenesis. In Homo sapiens (Human), this protein is Box C/D snoRNA protein 1 (ZNHIT6).